Reading from the N-terminus, the 393-residue chain is Riboflavin biosynthesis protein RibBA (393 aa).

The tract at residues 1 to 200 (MQFDTIELAI…IKSLVAFRKA (200 aa)) is DHBP synthase. D-ribulose 5-phosphate is bound by residues 27–28 (RE), Asp-32, 139–143 (RNGHT), and Glu-163. Glu-28 lines the Mg(2+) pocket. His-142 serves as a coordination point for Mg(2+). The GTP cyclohydrolase II stretch occupies residues 201 to 393 (VELNVNLKAK…TKKNKMGHLI (193 aa)). 249–253 (RMHSA) contributes to the GTP binding site. Residues Cys-254, Cys-265, and Cys-267 each coordinate Zn(2+). GTP is bound by residues Gln-270, 291 to 293 (EGR), and Thr-313. Asp-325 (proton acceptor; for GTP cyclohydrolase activity) is an active-site residue. Catalysis depends on Arg-327, which acts as the Nucleophile; for GTP cyclohydrolase activity. Residues Ser-348 and Lys-353 each contribute to the GTP site.

In the N-terminal section; belongs to the DHBP synthase family. This sequence in the C-terminal section; belongs to the GTP cyclohydrolase II family. The cofactor is Mg(2+). Mn(2+) is required as a cofactor. Zn(2+) serves as cofactor.

The catalysed reaction is D-ribulose 5-phosphate = (2S)-2-hydroxy-3-oxobutyl phosphate + formate + H(+). The enzyme catalyses GTP + 4 H2O = 2,5-diamino-6-hydroxy-4-(5-phosphoribosylamino)-pyrimidine + formate + 2 phosphate + 3 H(+). Its pathway is cofactor biosynthesis; riboflavin biosynthesis; 2-hydroxy-3-oxobutyl phosphate from D-ribulose 5-phosphate: step 1/1. It functions in the pathway cofactor biosynthesis; riboflavin biosynthesis; 5-amino-6-(D-ribitylamino)uracil from GTP: step 1/4. Catalyzes the conversion of D-ribulose 5-phosphate to formate and 3,4-dihydroxy-2-butanone 4-phosphate. Functionally, catalyzes the conversion of GTP to 2,5-diamino-6-ribosylamino-4(3H)-pyrimidinone 5'-phosphate (DARP), formate and pyrophosphate. The protein is Riboflavin biosynthesis protein RibBA of Staphylococcus epidermidis (strain ATCC 35984 / DSM 28319 / BCRC 17069 / CCUG 31568 / BM 3577 / RP62A).